We begin with the raw amino-acid sequence, 509 residues long: Bifunctional purine biosynthesis protein PurH (509 aa).

One can recognise an MGS-like domain in the interval 1-146 (MTIQKINRVL…KNWYRVGVCV (146 aa)).

It belongs to the PurH family.

It carries out the reaction (6R)-10-formyltetrahydrofolate + 5-amino-1-(5-phospho-beta-D-ribosyl)imidazole-4-carboxamide = 5-formamido-1-(5-phospho-D-ribosyl)imidazole-4-carboxamide + (6S)-5,6,7,8-tetrahydrofolate. It catalyses the reaction IMP + H2O = 5-formamido-1-(5-phospho-D-ribosyl)imidazole-4-carboxamide. Its pathway is purine metabolism; IMP biosynthesis via de novo pathway; 5-formamido-1-(5-phospho-D-ribosyl)imidazole-4-carboxamide from 5-amino-1-(5-phospho-D-ribosyl)imidazole-4-carboxamide (10-formyl THF route): step 1/1. It participates in purine metabolism; IMP biosynthesis via de novo pathway; IMP from 5-formamido-1-(5-phospho-D-ribosyl)imidazole-4-carboxamide: step 1/1. The polypeptide is Bifunctional purine biosynthesis protein PurH (Natranaerobius thermophilus (strain ATCC BAA-1301 / DSM 18059 / JW/NM-WN-LF)).